Reading from the N-terminus, the 607-residue chain is MTQTFDPGAFLATCSGRPGVYRMFDAEATLLYVGKAKNLKKRLASYFRKTGHAPKTGALVSRIAQIETTITGNETEALLLEQTLIKEWRPPYNILLRDDKSYPYVFLSDNAFPRLSIHRGTKKAKGRYFGPYPSAGAIRESLSLLQKTFQVRQCEDSYFKNRTRPCLQYQIKRCKGPCVGLVEPEVYAEDVRHSVMFLEGRSNALSDELNASMEKAAMALDFERAAELRDQVALLRRVQDQQSMDGGTGDVDVVAAFVNPGGACVHLISVRGGRVLGSKNFFPQVGIEEEVGEVMSAFLAQYFLGGIDRELPGEVIVNVINDDFPAFVDAVEELRGVEMVISHRVRGTRARWQQMAVTNAEQALTARLANRQHVASRFEALAKVLGLEDPPMRLECYDISHSSGEATVASCVVFGPEGPIKSDYRRFNIEGVTAGDDYAAMHQALTRRYSRIKAGEGKLPDVLLVDGGKGQMSMARDVLNELQVPELILLGVAKGTTRKAGFETLYLNDSAHEFTLPGDSPALHLIQQIRDEAHRFAITGHRARRGKTRRTSTLEGVAGVGPTRRRDLLKHFGGLQELSRASIDEIAKAPGISKKLAESIYANLHSE.

One can recognise a GIY-YIG domain in the interval 16-94 (GRPGVYRMFD…IKEWRPPYNI (79 aa)). The UVR domain maps to 203–238 (NALSDELNASMEKAAMALDFERAAELRDQVALLRRV).

It belongs to the UvrC family. In terms of assembly, interacts with UvrB in an incision complex.

It is found in the cytoplasm. Functionally, the UvrABC repair system catalyzes the recognition and processing of DNA lesions. UvrC both incises the 5' and 3' sides of the lesion. The N-terminal half is responsible for the 3' incision and the C-terminal half is responsible for the 5' incision. The sequence is that of UvrABC system protein C from Pseudomonas syringae pv. syringae (strain B728a).